Here is a 354-residue protein sequence, read N- to C-terminus: Uroporphyrinogen decarboxylase (354 aa).

Residues 27-31 (RQAGR), Asp77, Tyr154, Thr209, and His327 contribute to the substrate site.

Belongs to the uroporphyrinogen decarboxylase family. In terms of assembly, homodimer.

It is found in the cytoplasm. The catalysed reaction is uroporphyrinogen III + 4 H(+) = coproporphyrinogen III + 4 CO2. It functions in the pathway porphyrin-containing compound metabolism; protoporphyrin-IX biosynthesis; coproporphyrinogen-III from 5-aminolevulinate: step 4/4. In terms of biological role, catalyzes the decarboxylation of four acetate groups of uroporphyrinogen-III to yield coproporphyrinogen-III. This is Uroporphyrinogen decarboxylase from Salmonella schwarzengrund (strain CVM19633).